A 353-amino-acid chain; its full sequence is MSEPLKPRIDFAEPLKEEPTSAFKAQQTFSEAESRTFAPAAIDERPEDEGVAEAAVDAALRPKRSLWRKMVMGGLALFGASVVGQGVQWTMNAWQTQDWVALGGCAAGALIIGAGVGSVVTEWRRLWRLRQRAHERDEARELLHSHSVGKGRAFCEKLAQQAGIDQSHPALQRWYAAIHETQNDREIVGLYANLVQPVLDAQARREISRFAAESTLMIVVSPLALVDMAFIAWRNLRLINRIATLYGIELGYYSRLRLFRLVLLNIAFAGASELVREVGMDWMSQDLAARLSTRAAQGIGAGLLTARLGIKAMELCRPLPWIDNDKPRLGDFRRQLIGQLKETLQKSKSSPEK.

Over residues 1-19 (MSEPLKPRIDFAEPLKEEP) the composition is skewed to basic and acidic residues. The disordered stretch occupies residues 1–35 (MSEPLKPRIDFAEPLKEEPTSAFKAQQTFSEAESR). A run of 3 helical transmembrane segments spans residues 70 to 90 (MVMG…VQWT), 100 to 120 (VALG…GSVV), and 213 to 233 (ESTL…FIAW).

This sequence belongs to the UPF0283 family.

It localises to the cell inner membrane. This Salmonella newport (strain SL254) protein is UPF0283 membrane protein YcjF.